Reading from the N-terminus, the 222-residue chain is Glutathione S-transferase A1 (222 aa).

Met-1 is modified (N-acetylmethionine). Ala-2 carries the N-acetylalanine; in Glutathione S-transferase A1, N-terminally processed modification. In terms of domain architecture, GST N-terminal spans 3-83 (GKPTLHYFNG…YIATKYNLYG (81 aa)). Lys-4 carries the post-translational modification N6-succinyllysine. Residues Tyr-9, Lys-45, 54-55 (QV), and 67-68 (QT) contribute to the glutathione site. In terms of domain architecture, GST C-terminal spans 85–208 (DMKERALIDM…QPGSQRKPPT (124 aa)).

It belongs to the GST superfamily. Alpha family. As to quaternary structure, homodimer or heterodimer of GSTA1 and GSTA2. Expressed in corpus luteum, adrenal gland, testis, liver, lung, thyroid and kidney.

The protein resides in the cytoplasm. The catalysed reaction is RX + glutathione = an S-substituted glutathione + a halide anion + H(+). The enzyme catalyses prostaglandin A2 + glutathione = prostaglandin A2-S-(R)-glutathione. It catalyses the reaction prostaglandin J2 + glutathione = prostaglandin J2-S-(R)-glutathione. It carries out the reaction (13S)-hydroperoxy-(9Z,11E)-octadecadienoate + 2 glutathione = (13S)-hydroxy-(9Z,11E)-octadecadienoate + glutathione disulfide + H2O. The catalysed reaction is androst-5-ene-3,17-dione = androst-4-ene-3,17-dione. Its function is as follows. Glutathione S-transferase that catalyzes the nucleophilic attack of the sulfur atom of glutathione on the electrophilic groups of a wide range of exogenous and endogenous compounds. Involved in the formation of glutathione conjugates of both prostaglandin A2 (PGA2) and prostaglandin J2 (PGJ2). It also catalyzes the isomerization of D5-androstene-3,17-dione (AD) into D4-androstene-3,17-dione and may therefore play an important role in hormone biosynthesis. Through its glutathione-dependent peroxidase activity toward the fatty acid hydroperoxide (13S)-hydroperoxy-(9Z,11E)-octadecadienoate/13-HPODE it is also involved in the metabolism of oxidized linoleic acid. The protein is Glutathione S-transferase A1 (GSTA1) of Bos taurus (Bovine).